The primary structure comprises 564 residues: Arginine--tRNA ligase (564 aa).

The short motif at 136 to 146 is the 'HIGH' region element; that stretch reads ANPTGPLHMGN.

Belongs to the class-I aminoacyl-tRNA synthetase family. As to quaternary structure, monomer.

Its subcellular location is the cytoplasm. The enzyme catalyses tRNA(Arg) + L-arginine + ATP = L-arginyl-tRNA(Arg) + AMP + diphosphate. This Ruminiclostridium cellulolyticum (strain ATCC 35319 / DSM 5812 / JCM 6584 / H10) (Clostridium cellulolyticum) protein is Arginine--tRNA ligase.